The following is a 320-amino-acid chain: Ferrochelatase (320 aa).

Residues His-194 and Glu-275 each contribute to the Fe cation site.

This sequence belongs to the ferrochelatase family.

The protein resides in the cytoplasm. The enzyme catalyses heme b + 2 H(+) = protoporphyrin IX + Fe(2+). The protein operates within porphyrin-containing compound metabolism; protoheme biosynthesis; protoheme from protoporphyrin-IX: step 1/1. In terms of biological role, catalyzes the ferrous insertion into protoporphyrin IX. This Klebsiella pneumoniae (strain 342) protein is Ferrochelatase.